The primary structure comprises 459 residues: Vasoactive intestinal polypeptide receptor 1 (459 aa).

An N-terminal signal peptide occupies residues 1 to 30 (MRPPSLPPARWLCVLAGALACALGPAGSRA). Topologically, residues 31 to 142 (ASPHQECEYL…EQQQTEFYDA (112 aa)) are extracellular. Disulfide bonds link Cys37–Cys209, Cys50–Cys72, Cys63–Cys105, Cys86–Cys122, and Cys216–Cys286. N-linked (GlcNAc...) asparagine glycosylation is found at Asn58, Asn69, Asn100, and Asn104. A helical transmembrane segment spans residues 143 to 167 (VKTGYTIGYSLSLASLLVAMAILSL). Over 168–175 (FRKLHCTR) the chain is Cytoplasmic. Residues 176 to 197 (NYIHMHLFMSFILRATAVFIKD) traverse the membrane as a helical segment. The Extracellular portion of the chain corresponds to 198-217 (MALFNNGETDHCSEASVSCK). A helical membrane pass occupies residues 218 to 242 (AAVVFFQYCVMANFFWLLVEGLYLH). At 243–255 (TLLAVSFFSERKY) the chain is on the cytoplasmic side. The helical transmembrane segment at 256–277 (FWGYILIGWGVPSVFIMIWTIV) threads the bilayer. Topologically, residues 278–293 (RIHFEDFGCWDTIINS) are extracellular. An N-linked (GlcNAc...) asparagine glycan is attached at Asn292. Residues 294–318 (SLWWIIKGPILISILVNFILFICII) traverse the membrane as a helical segment. Over 319–340 (RILVQKLRPPDIGKNDSSPYSR) the chain is Cytoplasmic. The helical transmembrane segment at 341 to 361 (LAKSTLLLIPLFGVHYVMFAF) threads the bilayer. At 362–369 (FPDNFKAQ) the chain is on the extracellular side. Residues 370–393 (VKMVFELVVGSFQGFVVAILYCFL) traverse the membrane as a helical segment. Topologically, residues 394-459 (NGEVQAELRR…SSFQAEVSLV (66 aa)) are cytoplasmic.

Belongs to the G-protein coupled receptor 2 family. As to quaternary structure, interacts with ADCYAP1/PACAP; activated by both PACAP27 and PACAP38 neuropeptides. Interacts with VIP; the interaction results in VIPR1 activation.

It localises to the cell membrane. Its function is as follows. G protein-coupled receptor activated by the neuropeptides vasoactive intestinal peptide (VIP) and pituitary adenylate cyclase-activating polypeptide (ADCYAP1/PACAP). Binds VIP and both PACAP27 and PACAP38 bioactive peptides with the following order of ligand affinity VIP = PACAP27 &gt; PACAP38. Ligand binding causes a conformation change that triggers signaling via guanine nucleotide-binding proteins (G proteins) and modulates the activity of downstream effectors. Activates cAMP-dependent pathway. The chain is Vasoactive intestinal polypeptide receptor 1 from Mus musculus (Mouse).